A 366-amino-acid polypeptide reads, in one-letter code: tRNA-specific 2-thiouridylase MnmA (366 aa).

Residues 10–17 and I36 contribute to the ATP site; that span reads GLSGGVDS. Catalysis depends on C98, which acts as the Nucleophile. C98 and C194 are oxidised to a cystine. ATP is bound at residue G122. An interaction with tRNA region spans residues 144-146; sequence KDQ. C194 functions as the Cysteine persulfide intermediate in the catalytic mechanism. Residues 303 to 304 form an interaction with tRNA region; it reads RY.

This sequence belongs to the MnmA/TRMU family.

The protein resides in the cytoplasm. It carries out the reaction S-sulfanyl-L-cysteinyl-[protein] + uridine(34) in tRNA + AH2 + ATP = 2-thiouridine(34) in tRNA + L-cysteinyl-[protein] + A + AMP + diphosphate + H(+). Its function is as follows. Catalyzes the 2-thiolation of uridine at the wobble position (U34) of tRNA, leading to the formation of s(2)U34. The chain is tRNA-specific 2-thiouridylase MnmA from Chlorobaculum tepidum (strain ATCC 49652 / DSM 12025 / NBRC 103806 / TLS) (Chlorobium tepidum).